A 769-amino-acid chain; its full sequence is Serine protease HtrA-like (769 aa).

Residues 1–20 (MDIGKKHVIPKSQYRRKRRE) show a composition bias toward basic residues. Disordered regions lie at residues 1–287 (MDIG…DKDN) and 324–390 (EDKH…KGRA). Composition is skewed to basic and acidic residues over residues 21-64 (FFHN…ERFK) and 71-108 (LEQRNRDVNENKAEESKSNQDSKSAYNRDHYLTDDVSK). Over residues 126–137 (YEQNSEATLSTK) the composition is skewed to polar residues. Over residues 138-186 (STDKVESTEMRKLSSDKNKVGHEEQHVLSKPSEHDKETRIDSESSRTDS) the composition is skewed to basic and acidic residues. Positions 247–262 (QQSQNEQTKTYTYGDS) are enriched in polar residues. Basic and acidic residues predominate over residues 264 to 287 (QNDKSNHENDLSHHTPSISDDKDN). Positions 331-347 (ADSSETVGYQSQSTASH) are enriched in polar residues. The span at 348 to 364 (RSTEKRNISINDHDKLN) shows a compositional bias: basic and acidic residues. Over residues 365 to 390 (GQKTNTKTSANNNQKKATSKLNKGRA) the composition is skewed to polar residues. Residues 410-430 (LVILMGIIILIVILNAIFNNV) traverse the membrane as a helical segment. Active-site charge relay system residues include His-504, Asp-534, and Ser-619. A PDZ domain is found at 680 to 733 (IASLNSFERQAVKLPGKVKNGVVVDQVDNNGLADQSGLKKGDVITELDGKLLED).

It belongs to the peptidase S1C family.

The protein resides in the cell membrane. This Staphylococcus aureus (strain N315) protein is Serine protease HtrA-like.